Consider the following 148-residue polypeptide: Urease accessory protein UreE (148 aa).

Belongs to the UreE family.

It localises to the cytoplasm. Functionally, involved in urease metallocenter assembly. Binds nickel. Probably functions as a nickel donor during metallocenter assembly. This Bacillus sp. (strain TB-90) protein is Urease accessory protein UreE.